Consider the following 261-residue polypeptide: uncharacterized protein (261 aa).

Positions 1–22 (MAETTEPPSDAGTSQADAMALA) are disordered. The chain crosses the membrane as a helical span at residues 107–127 (IAMAAAVVIICGFTGLSGYIV).

The protein to M.tuberculosis Rv1362c.

Its subcellular location is the membrane. This is an uncharacterized protein from Mycobacterium tuberculosis (strain ATCC 25618 / H37Rv).